Reading from the N-terminus, the 178-residue chain is Peptide deformylase (178 aa).

Fe cation-binding residues include Cys-102 and His-144. Glu-145 is an active-site residue. His-148 serves as a coordination point for Fe cation.

The protein belongs to the polypeptide deformylase family. It depends on Fe(2+) as a cofactor.

It catalyses the reaction N-terminal N-formyl-L-methionyl-[peptide] + H2O = N-terminal L-methionyl-[peptide] + formate. Its function is as follows. Removes the formyl group from the N-terminal Met of newly synthesized proteins. Requires at least a dipeptide for an efficient rate of reaction. N-terminal L-methionine is a prerequisite for activity but the enzyme has broad specificity at other positions. This is Peptide deformylase from Leptospira borgpetersenii serovar Hardjo-bovis (strain JB197).